The chain runs to 169 residues: Protein-export protein SecB (169 aa).

This sequence belongs to the SecB family. Homotetramer, a dimer of dimers. One homotetramer interacts with 1 SecA dimer.

It is found in the cytoplasm. In terms of biological role, one of the proteins required for the normal export of preproteins out of the cell cytoplasm. It is a molecular chaperone that binds to a subset of precursor proteins, maintaining them in a translocation-competent state. It also specifically binds to its receptor SecA. This chain is Protein-export protein SecB, found in Haemophilus influenzae (strain PittEE).